The chain runs to 338 residues: Anthranilate phosphoribosyltransferase (338 aa).

Residues Gly-82, 85–86 (GD), Thr-90, 92–95 (NIST), 110–118 (KHGNRAASS), and Ser-122 contribute to the 5-phospho-alpha-D-ribose 1-diphosphate site. Gly-82 contacts anthranilate. Ser-94 lines the Mg(2+) pocket. Residue Asn-113 participates in anthranilate binding. Arg-168 lines the anthranilate pocket. Residues Asp-226 and Glu-227 each coordinate Mg(2+).

It belongs to the anthranilate phosphoribosyltransferase family. In terms of assembly, homodimer. Mg(2+) is required as a cofactor.

The catalysed reaction is N-(5-phospho-beta-D-ribosyl)anthranilate + diphosphate = 5-phospho-alpha-D-ribose 1-diphosphate + anthranilate. It participates in amino-acid biosynthesis; L-tryptophan biosynthesis; L-tryptophan from chorismate: step 2/5. Its function is as follows. Catalyzes the transfer of the phosphoribosyl group of 5-phosphorylribose-1-pyrophosphate (PRPP) to anthranilate to yield N-(5'-phosphoribosyl)-anthranilate (PRA). The sequence is that of Anthranilate phosphoribosyltransferase from Deinococcus radiodurans (strain ATCC 13939 / DSM 20539 / JCM 16871 / CCUG 27074 / LMG 4051 / NBRC 15346 / NCIMB 9279 / VKM B-1422 / R1).